A 218-amino-acid chain; its full sequence is Ribose-5-phosphate isomerase A (218 aa).

Substrate is bound by residues 28–31 (TGST), 81–84 (DGAD), and 94–97 (KGGG). The Proton acceptor role is filled by Glu103. Residue Lys121 participates in substrate binding.

It belongs to the ribose 5-phosphate isomerase family. In terms of assembly, homodimer.

The catalysed reaction is aldehydo-D-ribose 5-phosphate = D-ribulose 5-phosphate. It participates in carbohydrate degradation; pentose phosphate pathway; D-ribose 5-phosphate from D-ribulose 5-phosphate (non-oxidative stage): step 1/1. In terms of biological role, catalyzes the reversible conversion of ribose-5-phosphate to ribulose 5-phosphate. The protein is Ribose-5-phosphate isomerase A of Yersinia pseudotuberculosis serotype IB (strain PB1/+).